Consider the following 605-residue polypeptide: DNA primase (605 aa).

Residues 39-63 form a CHC2-type zinc finger; that stretch reads CPFHHERTPSFHVVPDKKMYYCFGC. One can recognise a Toprim domain in the interval 257-338; the sequence is RAAIICEGYM…EVRIVELNGG (82 aa). Mg(2+)-binding residues include E263, D307, and D309.

Belongs to the DnaG primase family. In terms of assembly, monomer. Interacts with DnaB. The cofactor is Zn(2+). Mg(2+) is required as a cofactor.

The catalysed reaction is ssDNA + n NTP = ssDNA/pppN(pN)n-1 hybrid + (n-1) diphosphate.. Functionally, RNA polymerase that catalyzes the synthesis of short RNA molecules used as primers for DNA polymerase during DNA replication. The polypeptide is DNA primase (Treponema pallidum (strain Nichols)).